A 231-amino-acid chain; its full sequence is 2-hydroxy-3-keto-5-methylthiopentenyl-1-phosphate phosphatase (231 aa).

Belongs to the HAD-like hydrolase superfamily. MtnX family.

It catalyses the reaction 2-hydroxy-5-methylsulfanyl-3-oxopent-1-enyl phosphate + H2O = 1,2-dihydroxy-5-(methylsulfanyl)pent-1-en-3-one + phosphate. Its pathway is amino-acid biosynthesis; L-methionine biosynthesis via salvage pathway; L-methionine from S-methyl-5-thio-alpha-D-ribose 1-phosphate: step 4/6. Dephosphorylates 2-hydroxy-3-keto-5-methylthiopentenyl-1-phosphate (HK-MTPenyl-1-P) yielding 1,2-dihydroxy-3-keto-5-methylthiopentene (DHK-MTPene). This chain is 2-hydroxy-3-keto-5-methylthiopentenyl-1-phosphate phosphatase, found in Bacillus pumilus (strain SAFR-032).